A 294-amino-acid chain; its full sequence is Probable endonuclease 4 (294 aa).

Positions 78, 118, 155, 189, 192, 226, 239, 241, and 271 each coordinate Zn(2+).

The protein belongs to the AP endonuclease 2 family. It depends on Zn(2+) as a cofactor.

It carries out the reaction Endonucleolytic cleavage to 5'-phosphooligonucleotide end-products.. In terms of biological role, endonuclease IV plays a role in DNA repair. It cleaves phosphodiester bonds at apurinic or apyrimidinic (AP) sites, generating a 3'-hydroxyl group and a 5'-terminal sugar phosphate. This Oleidesulfovibrio alaskensis (strain ATCC BAA-1058 / DSM 17464 / G20) (Desulfovibrio alaskensis) protein is Probable endonuclease 4.